The primary structure comprises 293 residues: Small ribosomal subunit protein uS2 (293 aa).

The interval 239–293 (PAGGADWEAAPAGFPAAATGEWSEAQPATWESGAAAATGPSTEWADSAPKDTAGW) is disordered. Positions 247-256 (AAPAGFPAAA) are enriched in low complexity.

This sequence belongs to the universal ribosomal protein uS2 family. In terms of assembly, component of the small ribosomal subunit. Mature ribosomes consist of a small (40S) and a large (60S) subunit. The 40S subunit contains about 33 different proteins and 1 molecule of RNA (18S). The 60S subunit contains about 49 different proteins and 3 molecules of RNA (25S, 5.8S and 5S). Interacts with RPS21.

Its subcellular location is the cytoplasm. Functionally, required for the assembly and/or stability of the 40S ribosomal subunit. Required for the processing of the 20S rRNA-precursor to mature 18S rRNA in a late step of the maturation of 40S ribosomal subunits. This Chaetomium globosum (strain ATCC 6205 / CBS 148.51 / DSM 1962 / NBRC 6347 / NRRL 1970) (Soil fungus) protein is Small ribosomal subunit protein uS2.